Consider the following 95-residue polypeptide: Co-chaperonin GroES (95 aa).

It belongs to the GroES chaperonin family. As to quaternary structure, heptamer of 7 subunits arranged in a ring. Interacts with the chaperonin GroEL.

Its subcellular location is the cytoplasm. In terms of biological role, together with the chaperonin GroEL, plays an essential role in assisting protein folding. The GroEL-GroES system forms a nano-cage that allows encapsulation of the non-native substrate proteins and provides a physical environment optimized to promote and accelerate protein folding. GroES binds to the apical surface of the GroEL ring, thereby capping the opening of the GroEL channel. This is Co-chaperonin GroES from Glaesserella parasuis serovar 5 (strain SH0165) (Haemophilus parasuis).